The primary structure comprises 309 residues: 1,2-phenylacetyl-CoA epoxidase, subunit A (309 aa).

Substrate-binding positions include Arg-33, Gln-37, Lys-103 to Ser-106, Asn-132, Met-193, Ser-202 to Asn-204, Lys-214, and Asn-218.

In terms of assembly, forms a stable heterotetramer (dimer of heterodimers) with PaaC. Fe cation is required as a cofactor.

It carries out the reaction phenylacetyl-CoA + NADPH + O2 + H(+) = 2-(1,2-epoxy-1,2-dihydrophenyl)acetyl-CoA + NADP(+) + H2O. It functions in the pathway aromatic compound metabolism; phenylacetate degradation. Its function is as follows. Component of 1,2-phenylacetyl-CoA epoxidase multicomponent enzyme system which catalyzes the reduction of phenylacetyl-CoA (PA-CoA) to form 1,2-epoxyphenylacetyl-CoA. The subunit A is the catalytic subunit involved in the incorporation of one atom of molecular oxygen into phenylacetyl-CoA. This Escherichia coli (strain K12) protein is 1,2-phenylacetyl-CoA epoxidase, subunit A (paaA).